Consider the following 78-residue polypeptide: uncharacterized protein (78 aa).

A disordered region spans residues M1–K28.

This is an uncharacterized protein from Saccharomyces cerevisiae (strain ATCC 204508 / S288c) (Baker's yeast).